We begin with the raw amino-acid sequence, 61 residues long: Probable tautomerase SAV1363 (61 aa).

The Proton acceptor; via imino nitrogen role is filled by Pro2.

This sequence belongs to the 4-oxalocrotonate tautomerase family.

In Staphylococcus aureus (strain Mu50 / ATCC 700699), this protein is Probable tautomerase SAV1363.